We begin with the raw amino-acid sequence, 371 residues long: uncharacterized protein (371 aa).

One can recognise an ABC transporter domain in the interval 20–250 (VTIRNVTKRY…PANIFVAGFI (231 aa)). 52–59 (GPSGCGKS) serves as a coordination point for ATP.

Belongs to the ABC transporter superfamily.

The protein resides in the cell inner membrane. Functionally, probably part of a binding-protein-dependent transport system y4oPQRS. This system probably transports a sugar-like molecule. Probably responsible for energy coupling to the transport system. This is an uncharacterized protein from Sinorhizobium fredii (strain NBRC 101917 / NGR234).